The sequence spans 556 residues: MSVSAFNRRWAAVILEALTRHGVRHICIAPGSRSTPLTLAAAENSAFIHHTHFDERGLGHLALGLAKVSKQPVAVIVTSGTAVANLYPALIEAGLTGEKLILLTADRPPELIDCGANQAIRQPGMFASHPTHSISLPRPTQDIPARWLVSTIDHALGTLHAGGVHINCPFAEPLYGEMDDTGISWQQRLGDWWQDDKPWLREAPHRESEKQRDWFFWRQKRGVVVAGRMSAEEGKKVALWAQTLGWPLIGDVLSQTGQPLPCADLWLGNAKATSELQQAQIVVQLGSSLTGKRLLQWQASCEPEEYWIVDDIEGRLDPAHHRGRRLIANIADWLELHPAEKRQPWCVEIPRLAEQAMQAVIARRDAFGEAQLAHRISDYLPEQGQLFVGNSLVVRLIDALSQLPAGYPVYSNRGASGIDGLLSTAAGVQRASGKPTLAIVGDLSALYDLNALALLRQVSAPLVLIVVNNNGGQIFSLLPTPKSERERFYLMPQNVHFEHAAAMFELKYHSPQNWQELETTLVDAWRTPTTTVIEMVVNDTDGAQTLQQLLAQVSHL.

It belongs to the TPP enzyme family. MenD subfamily. As to quaternary structure, homodimer. Mg(2+) is required as a cofactor. The cofactor is Mn(2+). Thiamine diphosphate serves as cofactor.

The catalysed reaction is isochorismate + 2-oxoglutarate + H(+) = 5-enolpyruvoyl-6-hydroxy-2-succinyl-cyclohex-3-ene-1-carboxylate + CO2. The protein operates within quinol/quinone metabolism; 1,4-dihydroxy-2-naphthoate biosynthesis; 1,4-dihydroxy-2-naphthoate from chorismate: step 2/7. Its pathway is quinol/quinone metabolism; menaquinone biosynthesis. Functionally, catalyzes the thiamine diphosphate-dependent decarboxylation of 2-oxoglutarate and the subsequent addition of the resulting succinic semialdehyde-thiamine pyrophosphate anion to isochorismate to yield 2-succinyl-5-enolpyruvyl-6-hydroxy-3-cyclohexene-1-carboxylate (SEPHCHC). This Escherichia coli O127:H6 (strain E2348/69 / EPEC) protein is 2-succinyl-5-enolpyruvyl-6-hydroxy-3-cyclohexene-1-carboxylate synthase.